Here is a 503-residue protein sequence, read N- to C-terminus: MDLSPRNRPLLDSSSLDSGSLTSLDSSVFCSEGEGEPLALGDCFTVNVGGSRFVLSQQALSCFPHTRLGKLAVVVASYRRLGALAAAPSPLELCDDANPVDNEYFFDRSSQAFRYVLHYYRTGRLHVMEQLCALSFLQEIQYWGIDELSIDSCCRDRYFRRKELSETLDFKKDTDDQESQHESEQDFSKGPCPTVRQKLWDILEKPGSSTAARIFGVISIIFVAVSIVNMALMSAELSWLNLQLLEILEYVCISWFTGEFVLRFLCVKDRCHFLRKVPNIIDLLAILPFYITLLVESLSGSHTTQELENVGRLVQVLRLLRALRMLKLGRHSTGLRSLGMTITQCYEEVGLLLLFLSVGISIFSTIEYFAEQSIPDTTFTSVPCAWWWATTSMTTVGYGDIRPDTTTGKIVAFMCILSGILVLALPIAIINDRFSACYFTLKLKEAAVRQREALKKLTKNIATDSYISVNLRDVYARSIMEMLRLKGRERASTRSSGGDDFWF.

2 disordered regions span residues 1-20 (MDLS…DSGS) and 171-192 (KKDT…KGPC). The Cytoplasmic portion of the chain corresponds to 3–213 (LSPRNRPLLD…EKPGSSTAAR (211 aa)). Residues 10 to 20 (LLDSSSLDSGS) show a composition bias toward low complexity. Positions 171–187 (KKDTDDQESQHESEQDF) are enriched in basic and acidic residues. A helical membrane pass occupies residues 214-234 (IFGVISIIFVAVSIVNMALMS). Over 235–241 (AELSWLN) the chain is Extracellular. A helical transmembrane segment spans residues 242 to 262 (LQLLEILEYVCISWFTGEFVL). Residues 263–279 (RFLCVKDRCHFLRKVPN) lie on the Cytoplasmic side of the membrane. Residues 280–300 (IIDLLAILPFYITLLVESLSG) traverse the membrane as a helical segment. Topologically, residues 301–312 (SHTTQELENVGR) are extracellular. The chain crosses the membrane as a helical; Voltage-sensor span at residues 313–334 (LVQVLRLLRALRMLKLGRHSTG). Residues 335–348 (LRSLGMTITQCYEE) are Cytoplasmic-facing. The chain crosses the membrane as a helical span at residues 349-369 (VGLLLLFLSVGISIFSTIEYF). The Selectivity filter motif lies at 395–400 (TVGYGD). Residues 410-430 (IVAFMCILSGILVLALPIAII) traverse the membrane as a helical segment. Residues 431–503 (NDRFSACYFT…RSSGGDDFWF (73 aa)) lie on the Cytoplasmic side of the membrane.

This sequence belongs to the potassium channel family. V (TC 1.A.1.2) subfamily. Kv8.1/KCNV1 sub-subfamily. In terms of assembly, heteromultimer with KCNB1 and KCNB2. Interacts with KCNC4 and KCND1.

The protein localises to the cell membrane. Functionally, potassium channel subunit that does not form functional channels by itself. Modulates KCNB1 and KCNB2 channel activity by shifting the threshold for inactivation to more negative values and by slowing the rate of inactivation. Can down-regulate the channel activity of KCNB1, KCNB2, KCNC4 and KCND1, possibly by trapping them in intracellular membranes. The polypeptide is Potassium voltage-gated channel subfamily V member 1 (Kcnv1) (Mus musculus (Mouse)).